The following is a 100-amino-acid chain: MDSRFLLALFLVLLVLGCEVQAAQQLQQDDPGSPALLGKVQESISSYWDTAKAAAQDLYQRTYLTSVDEKLRDMYSKSSAAMTTYAIIFTDQILTLLKGE.

Residues 1–22 (MDSRFLLALFLVLLVLGCEVQA) form the signal peptide. The interval 66 to 74 (SVDEKLRDM) is lipid binding. The tract at residues 78–100 (SSAAMTTYAIIFTDQILTLLKGE) is lipoprotein lipase cofactor.

Belongs to the apolipoprotein C2 family. Proapolipoprotein C-II is synthesized as a sialic acid containing glycoprotein which is subsequently desialylated prior to its proteolytic processing. In terms of processing, proapolipoprotein C-II, the major form found in plasma undergoes proteolytic cleavage of its N-terminal hexapeptide to generate the mature form apolipoprotein C-II, which occurs as the minor form in plasma.

It is found in the secreted. Functionally, component of chylomicrons, very low-density lipoproteins (VLDL), low-density lipoproteins (LDL), and high-density lipoproteins (HDL) in plasma. Plays an important role in lipoprotein metabolism as an activator of lipoprotein lipase. The sequence is that of Apolipoprotein C-II (APOC2) from Myodes glareolus (Bank vole).